A 211-amino-acid polypeptide reads, in one-letter code: tRNA (guanine-N(7)-)-methyltransferase (211 aa).

Positions 44, 69, 96, and 118 each coordinate S-adenosyl-L-methionine. The active site involves Asp-118. Lys-122 is a substrate binding site. Residues 124–129 (RHEKRR) form an interaction with RNA region. Substrate is bound by residues Asp-154 and 191 to 194 (TEYE).

Belongs to the class I-like SAM-binding methyltransferase superfamily. TrmB family.

The catalysed reaction is guanosine(46) in tRNA + S-adenosyl-L-methionine = N(7)-methylguanosine(46) in tRNA + S-adenosyl-L-homocysteine. It functions in the pathway tRNA modification; N(7)-methylguanine-tRNA biosynthesis. In terms of biological role, catalyzes the formation of N(7)-methylguanine at position 46 (m7G46) in tRNA. The chain is tRNA (guanine-N(7)-)-methyltransferase from Streptococcus pneumoniae (strain Taiwan19F-14).